Consider the following 473-residue polypeptide: Envelope glycoprotein M (473 aa).

Topologically, residues 1–32 (MGRPAPRGSPDSAPPTKGMTGARTAWWVWCVQ) are intravirion. A helical membrane pass occupies residues 33–53 (VATFVVSAVCVTGLLVLASVF). Residues 54–90 (RARFPCFYATASSYAGVNSTAEVRGGVAVPLRLDTQS) are Virion surface-facing. A helical membrane pass occupies residues 91 to 111 (LVGTYVITAVLLLAVAVYAVV). Over 112–137 (GAVTSRYDRALDAGRRLAAARMAMPH) the chain is Intravirion. Residues 138-158 (ATLIAGNVCSWLLQITVLLLA) traverse the membrane as a helical segment. Over 159-163 (HRISQ) the chain is Virion surface. The helical transmembrane segment at 164 to 184 (LAHLVYVLHFACLVYFAAHFC) threads the bilayer. Over 185–216 (TRGVLSGTYLRQVHGLMELAPTHHRVVGPARA) the chain is Intravirion. Residues 217-237 (VLTNALLLGVFLCTADAAVSL) form a helical membrane-spanning segment. At 238-250 (NTIAAFNFNFSAP) the chain is on the virion surface side. Residues 251–271 (GMLICLTVLFAILVVSLLLVV) form a helical membrane-spanning segment. Residues 272-280 (EGVLCHYVR) are Intravirion-facing. A helical transmembrane segment spans residues 281–301 (VLVGPHLGAVAATGIVGLACE). Topologically, residues 302–318 (HYYTNGYYVVETQWPGA) are virion surface. The chain crosses the membrane as a helical span at residues 319–339 (QTGVRVALALVAAFALGMAVL). Over 340–473 (RCTRAYLYHR…DPVYSTVRRW (134 aa)) the chain is Intravirion. Disordered regions lie at residues 371-399 (KRVRSSMRGSRDGRHRPAPGSPPGIPEYA) and 440-473 (HPRHLPDDDPIYDTVGGYDPEPAEDPVYSTVRRW).

Belongs to the herpesviridae glycoprotein M family. Interacts (via N-terminus) with gN (via N-terminus). The gM-gN heterodimer forms the gCII complex.

Its subcellular location is the virion membrane. The protein localises to the host Golgi apparatus. The protein resides in the host trans-Golgi network. It is found in the host endosome membrane. It localises to the host nucleus inner membrane. Envelope glycoprotein important for virion assembly and egress. Plays a role in the correct incorporation of gH-gL into virion membrane. Directs the glycoprotein N (gN) to the host trans-Golgi network. This is Envelope glycoprotein M from Human herpesvirus 1 (strain 17) (HHV-1).